Consider the following 381-residue polypeptide: Cytochrome b (381 aa).

4 helical membrane-spanning segments follow: residues 31 to 51 (FGFLSSICLIVQILTGIFLAM), 75 to 97 (WLLRYIHTNGASMFFIVVYIHIF), 112 to 132 (VWVIGVLILLLMILTAFIGYV), and 178 to 198 (FFSLHYLMPFVIAAVSLVHLA). Residues H81 and H95 each coordinate heme b. Residues H182 and H196 each contribute to the heme b site. H201 is an a ubiquinone binding site. 4 helical membrane-spanning segments follow: residues 224-244 (FIVKDFLGMVIFIIFFSIFVY), 288-308 (LGGVTAMISAIAILAFLPWIH), 320-340 (LYRLFYWVMISCCLILGWIGG), and 347-367 (YVIIGQIASIYYFIYFIILLP).

This sequence belongs to the cytochrome b family. As to quaternary structure, the main subunits of complex b-c1 are: cytochrome b, cytochrome c1 and the Rieske protein. It depends on heme b as a cofactor.

The protein localises to the mitochondrion inner membrane. Functionally, component of the ubiquinol-cytochrome c reductase complex (complex III or cytochrome b-c1 complex) that is part of the mitochondrial respiratory chain. The b-c1 complex mediates electron transfer from ubiquinol to cytochrome c. Contributes to the generation of a proton gradient across the mitochondrial membrane that is then used for ATP synthesis. In Chondrus crispus (Carrageen Irish moss), this protein is Cytochrome b (MT-CYB).